Here is a 292-residue protein sequence, read N- to C-terminus: MRIIKYLTILVISVVILTSCQSSSSQESTKSGEFRIVPTTVALTMTLDKLDLPIVGKPTSYKTLPNRYKDVPEIGQPMEPNVEAVKKLKPTHVLSVSTIKDEMQPFYKQLNMKGYFYDFDSLKGMQKSITQLGDQFNRKAQAKELNDHLNSVKQKIENKAAKQKKHPKVLILMGVPGSYLVATDKSYIGDLVKIAGGENVIKVKDRQYISSNTENLLNINPDIILRLPHGMSEEVKKMFQKEFKQNDIWKHFKAVKNNHVYDLEEVPFGITANVDADKAMTQLYDLFYKDKK.

The first 19 residues, 1–19 (MRIIKYLTILVISVVILTS), serve as a signal peptide directing secretion. Cysteine 20 is lipidated: N-palmitoyl cysteine. A lipid anchor (S-diacylglycerol cysteine) is attached at cysteine 20. The 257-residue stretch at 35–291 (RIVPTTVALT…QLYDLFYKDK (257 aa)) folds into the Fe/B12 periplasmic-binding domain. Heme-binding residues include valine 41, alanine 42, serine 60, tyrosine 61, methionine 78, and histidine 229.

The protein belongs to the bacterial solute-binding protein 8 family. Heme b is required as a cofactor.

Its subcellular location is the cell membrane. Involved in heme (porphyrin) scavenging. Binds Fe(2+) and Fe(3+) heme but the largest fraction is Fe(2+) heme. Functions as a high-affinity heme binding protein and probably has a role in relaying heme-iron from cell wall-anchored isd proteins receptors to the probable permease IsdF. This chain is High-affinity heme uptake system protein IsdE (isdE), found in Staphylococcus aureus (strain MRSA252).